Here is a 223-residue protein sequence, read N- to C-terminus: von Willebrand factor C domain-containing protein 2-like (223 aa).

The first 21 residues, 1–21 (MGPFLPAICVVLLALNAAVSP), serve as a signal peptide directing secretion. VWFC domains lie at 51-110 (KGCV…PECK) and 114-172 (NFCE…PICK).

The protein localises to the secreted. The protein resides in the synapse. In terms of biological role, may play a role in bone differentiation and matrix mineralization. May play a role in neural development. This Danio rerio (Zebrafish) protein is von Willebrand factor C domain-containing protein 2-like (vwc2l).